We begin with the raw amino-acid sequence, 766 residues long: Protein sak1 (766 aa).

The segment at residues 101 to 176 (GICWLKRACE…YHYCGIKLRG (76 aa)) is a DNA-binding region (RFX-type winged-helix). 3 positions are modified to phosphoserine: Ser-223, Ser-224, and Ser-227. Disordered regions lie at residues 271 to 308 (PQAH…QPTY) and 708 to 731 (LQEH…QQQQ). A compositionally biased stretch (polar residues) spans 279 to 289 (HLSQSNVPPQL). Composition is skewed to low complexity over residues 290-308 (SHSS…QPTY) and 715-731 (QQHF…QQQQ).

Belongs to the RFX family.

Its subcellular location is the nucleus. In terms of biological role, positively regulates cyclic AMP-dependent protein kinase-mediated exit from the mitotic cell cycle. This chain is Protein sak1 (sak1), found in Schizosaccharomyces pombe (strain 972 / ATCC 24843) (Fission yeast).